Reading from the N-terminus, the 602-residue chain is Probable ATP-dependent RNA helicase ddx18 (602 aa).

A compositionally biased stretch (low complexity) spans 1-31; the sequence is MVSTKVKPTTTTTPTTTVNKTTQPTTTTTAS. The disordered stretch occupies residues 1–108; sequence MVSTKVKPTT…NNDNNTGNVS (108 aa). Polar residues predominate over residues 50-63; that stretch reads LASTPSVKQIQSQK. Acidic residues predominate over residues 79 to 99; that stretch reads DQEEEDQEEEEQEQEEEENEN. Residues 119 to 147 carry the Q motif motif; the sequence is IEFSNLPIEENTKKSIEEMGFKKMTPIQA. Positions 150–325 constitute a Helicase ATP-binding domain; that stretch reads ILPLLEGKDL…KVSLNNSPVY (176 aa). 163–170 is an ATP binding site; the sequence is ARTGSGKT. Residues 273–276 carry the DEAD box motif; that stretch reads DEAD. The Helicase C-terminal domain occupies 339–509; the sequence is GLEQGYVVCP…NVQDQLEKVV (171 aa). A disordered region spans residues 568–602; sequence SGKADFQKKSNNKSGFAQKQYGSKFPPKDGRQFDR. Residues 579-588 show a composition bias toward polar residues; it reads NKSGFAQKQY. Over residues 593–602 the composition is skewed to basic and acidic residues; sequence PPKDGRQFDR.

Belongs to the DEAD box helicase family. DDX18/HAS1 subfamily.

Its subcellular location is the nucleus. The protein resides in the nucleolus. It localises to the chromosome. The enzyme catalyses ATP + H2O = ADP + phosphate + H(+). In terms of biological role, ATP-binding RNA helicase which may be involved in the ribosome biogenesis. In Dictyostelium discoideum (Social amoeba), this protein is Probable ATP-dependent RNA helicase ddx18 (ddx18).